Reading from the N-terminus, the 159-residue chain is Phosphopantetheine adenylyltransferase (159 aa).

Thr-8 contacts substrate. ATP-binding positions include 8–9 (TF) and His-16. Substrate-binding residues include Lys-40, Thr-72, and Arg-86. ATP is bound by residues 87 to 89 (GLR), Glu-97, and 122 to 128 (YSFLSSS).

The protein belongs to the bacterial CoaD family. As to quaternary structure, homohexamer. Requires Mg(2+) as cofactor.

Its subcellular location is the cytoplasm. It carries out the reaction (R)-4'-phosphopantetheine + ATP + H(+) = 3'-dephospho-CoA + diphosphate. The protein operates within cofactor biosynthesis; coenzyme A biosynthesis; CoA from (R)-pantothenate: step 4/5. Its function is as follows. Reversibly transfers an adenylyl group from ATP to 4'-phosphopantetheine, yielding dephospho-CoA (dPCoA) and pyrophosphate. The chain is Phosphopantetheine adenylyltransferase from Prochlorococcus marinus subsp. pastoris (strain CCMP1986 / NIES-2087 / MED4).